The sequence spans 210 residues: Large ribosomal subunit protein bL25 (210 aa).

Residues 175–210 are disordered; that stretch reads IATILPPQQEEEIDSGEQQEAGQPDAAEGRETTPEE. Over residues 201-210 the composition is skewed to basic and acidic residues; sequence AEGRETTPEE.

It belongs to the bacterial ribosomal protein bL25 family. CTC subfamily. Part of the 50S ribosomal subunit; part of the 5S rRNA/L5/L18/L25 subcomplex. Contacts the 5S rRNA. Binds to the 5S rRNA independently of L5 and L18.

In terms of biological role, this is one of the proteins that binds to the 5S RNA in the ribosome where it forms part of the central protuberance. This is Large ribosomal subunit protein bL25 from Geobacillus kaustophilus (strain HTA426).